A 206-amino-acid chain; its full sequence is Small ribosomal subunit protein uS4 (206 aa).

The 61-residue stretch at 96-156 folds into the S4 RNA-binding domain; sequence RRLDNVVYRM…EKSKNQLRIK (61 aa).

Belongs to the universal ribosomal protein uS4 family. As to quaternary structure, part of the 30S ribosomal subunit. Contacts protein S5. The interaction surface between S4 and S5 is involved in control of translational fidelity.

One of the primary rRNA binding proteins, it binds directly to 16S rRNA where it nucleates assembly of the body of the 30S subunit. Its function is as follows. With S5 and S12 plays an important role in translational accuracy. The chain is Small ribosomal subunit protein uS4 from Hahella chejuensis (strain KCTC 2396).